Reading from the N-terminus, the 282-residue chain is ATP phosphoribosyltransferase (282 aa).

The protein belongs to the ATP phosphoribosyltransferase family. Long subfamily. The cofactor is Mg(2+).

It is found in the cytoplasm. It carries out the reaction 1-(5-phospho-beta-D-ribosyl)-ATP + diphosphate = 5-phospho-alpha-D-ribose 1-diphosphate + ATP. Its pathway is amino-acid biosynthesis; L-histidine biosynthesis; L-histidine from 5-phospho-alpha-D-ribose 1-diphosphate: step 1/9. With respect to regulation, feedback inhibited by histidine. Its function is as follows. Catalyzes the condensation of ATP and 5-phosphoribose 1-diphosphate to form N'-(5'-phosphoribosyl)-ATP (PR-ATP). Has a crucial role in the pathway because the rate of histidine biosynthesis seems to be controlled primarily by regulation of HisG enzymatic activity. This chain is ATP phosphoribosyltransferase, found in Halobacterium salinarum (strain ATCC 29341 / DSM 671 / R1).